The sequence spans 416 residues: Enterobactin exporter EntS (416 aa).

The Cytoplasmic portion of the chain corresponds to 1-21; that stretch reads MNKQSWLLNLSLLKTHPAFRA. Residues 22–42 traverse the membrane as a helical segment; the sequence is VFLARFISIVSLGLLGVAVPV. The Periplasmic portion of the chain corresponds to 43–55; it reads QIQMMTHSTWQVG. A helical membrane pass occupies residues 56-76; it reads LSVTLTGGAMFVGLMVGGVLA. Topologically, residues 77–83 are cytoplasmic; it reads DRYERKK. A helical transmembrane segment spans residues 84-104; it reads VILLARGTCGIGFIGLCLNAL. Over 105–109 the chain is Periplasmic; it reads LPEPS. A helical transmembrane segment spans residues 110–130; sequence LLAIYLLGLWDGFFASLGVTA. Over 131 to 156 the chain is Cytoplasmic; that stretch reads LLAATPALVGRENLMQAGAITMLTVR. The chain crosses the membrane as a helical span at residues 157 to 177; the sequence is LGSVISPMIGGLLLATGGVAW. Residue N178 is a topological domain, periplasmic. The chain crosses the membrane as a helical span at residues 179–199; it reads YGLAAAGTFITLLPLLSLPAL. Residues 200–218 lie on the Cytoplasmic side of the membrane; sequence PPPPQPREHPLKSLLAGFR. The helical transmembrane segment at 219 to 239 threads the bilayer; sequence FLLASPLVGGIALLGGLLTMA. Residues 240–256 are Periplasmic-facing; the sequence is SAVRVLYPALADNWQMS. Residues 257-277 traverse the membrane as a helical segment; the sequence is AAQIGFLYAAIPLGAAIGALT. Over 278–287 the chain is Cytoplasmic; that stretch reads SGKLAHSARP. The chain crosses the membrane as a helical span at residues 288-307; sequence GLLMLLSTLGSFLAIGLFGL. At 308-313 the chain is on the periplasmic side; that stretch reads MPMWIL. Residues 314–336 form a helical membrane-spanning segment; the sequence is GVICLALFGWLSAVSSLLQYTML. Residues 337-356 lie on the Cytoplasmic side of the membrane; the sequence is QTQTPEAMLGRINGLWTAQN. A helical membrane pass occupies residues 357–377; it reads VTGDAIGAALLGGLGAMMTPV. Position 378 (A378) is a topological domain, periplasmic. Residues 379 to 399 form a helical membrane-spanning segment; sequence SASASGFGLLIIGVLLLLVLV. At 400-416 the chain is on the cytoplasmic side; sequence ELRRFRQTPPQVTASDS.

It belongs to the major facilitator superfamily. EntS (TC 2.A.1.38) family.

It is found in the cell inner membrane. Functionally, component of an export pathway for enterobactin. This is Enterobactin exporter EntS from Escherichia coli O81 (strain ED1a).